Consider the following 840-residue polypeptide: MRAWGWVRNKFSSEDDYNDGASNKDYPDRFNEFDNSQNDHNDYTQNNAQFQNAQTTTFGRTISRVKAYYEIPEDDELDELASIPQWFKKNVTSNIFKNFLHYLKSLFPIIEWLPNYNPYWLINDLIAGITVGCVVVPQGMSYAKVATLPSEYGLYSSFVGVAIYCFFATSKDVSIGPVAVMSLITAKVIANVMAKDETYTAPQIATCLALLAGAITCGIGLLRLGFIIEFIPVPAVAGFTTGSALNILSGQVPALMGYKNKVTAKATYMVIIQSLKHLPDTTVDAAFGLVSLFILFFTKYMCQYLGKRYPRWQQAFFLTNTLRSAVVVIVGTAISYAICKHHRSDPPISIIKTVPRGFQHVGVPLITKKLCRDLASELPVSVIVLLLEHISIAKSFGRVNDYRIVPDQELIAMGVTNLIGIFFNAYPATGSFSRSAIKAKAGVKTPIAGIFTAAVVILSLYCLTDAFYYIPNAILSAVIIHAVTDLILPMKQTILFWRLQPLEACIFFISVIVSVFSSIENGIYVSVCLAAALLLLRIAKPHGSFLGKIQAANKYGSDNIANVRDIYVPLEMKEENPNLEIQSPPPGVFIFRLQESFTYPNASRVSTMISRRIKDLTRRGIDNIYVKDIDRPWNVPRQRKKKENSEIEDLRPLLQAIIFDFSAVNNLDTTAVQSLIDIRKELEIYANETVEFHFTNIRSGWIKRTLVAAGFGKPKGHAVDASVCVEVAAPLRDANLSAESSRNLSRIITPIYDDEEGNVSGHIYELDGKNNSDLSMHCQKGSNQVEIEFVEFNSRKYPFFHVDVASAVVDLQHRLLSPQKSDSFGSLKEGGTTTIKKIEN.

The next 12 membrane-spanning stretches (helical) occupy residues 120 to 140 (WLINDLIAGITVGCVVVPQGM), 148 to 168 (LPSEYGLYSSFVGVAIYCFFA), 173 to 193 (VSIGPVAVMSLITAKVIANVM), 208 to 228 (LALLAGAITCGIGLLRLGFII), 230 to 250 (FIPVPAVAGFTTGSALNILSG), 278 to 298 (LPDTTVDAAFGLVSLFILFFT), 315 to 335 (AFFLTNTLRSAVVVIVGTAIS), 410 to 430 (LIAMGVTNLIGIFFNAYPATG), 447 to 467 (IAGIFTAAVVILSLYCLTDAF), 470 to 490 (IPNAILSAVIIHAVTDLILPM), 505 to 525 (CIFFISVIVSVFSSIENGIYV), and 527 to 547 (VCLAAALLLLRIAKPHGSFLG). One can recognise an STAS domain in the interval 578–733 (NLEIQSPPPG…CVEVAAPLRD (156 aa)). Ser823 carries the phosphoserine modification.

It belongs to the SLC26A/SulP transporter (TC 2.A.53) family.

It is found in the membrane. Functionally, high affinity uptake of sulfate into the cell. This is Probable sulfate permease C869.05c from Schizosaccharomyces pombe (strain 972 / ATCC 24843) (Fission yeast).